Reading from the N-terminus, the 867-residue chain is Coiled-coil domain-containing protein 178 (867 aa).

4 coiled-coil regions span residues 153 to 204, 233 to 414, 445 to 470, and 662 to 696; these read DEKC…KIDS, WHLE…ENQY, ACTK…TNES, and MIFY…KNKF.

This is Coiled-coil domain-containing protein 178 (CCDC178) from Homo sapiens (Human).